Here is a 20-residue protein sequence, read N- to C-terminus: Blooming-related protein 2 (20 aa).

Positions Val1–Asp20 are disordered.

Possible 'checkpoint' protein for cell division in the blooming process. The polypeptide is Blooming-related protein 2 (Prorocentrum triestinum (Red tide alga)).